We begin with the raw amino-acid sequence, 248 residues long: Cytochrome c oxidase subunit 2 (248 aa).

At 1 to 43 (MTNLLNNWLIINQFGYDLPEPWQLGLQDAAHPVMEEIIFFHDQ) the chain is on the mitochondrial intermembrane side. A helical transmembrane segment spans residues 44-65 (VMFILIIIITTVLWLIVKALSG). At 66 to 79 (KAYHRYLVDGTLLE) the chain is on the mitochondrial matrix side. A helical membrane pass occupies residues 80 to 99 (IIWTIVPAIILILIAFPSLK). Topologically, residues 100 to 248 (LLYLMDEVMD…INWVLSGSDE (149 aa)) are mitochondrial intermembrane. Positions 180, 215, 217, 219, 223, and 226 each coordinate Cu cation. E217 is a binding site for Mg(2+).

This sequence belongs to the cytochrome c oxidase subunit 2 family. In terms of assembly, component of the cytochrome c oxidase (complex IV, CIV), a multisubunit enzyme composed of a catalytic core of 3 subunits and several supernumerary subunits. The complex exists as a monomer or a dimer and forms supercomplexes (SCs) in the inner mitochondrial membrane with ubiquinol-cytochrome c oxidoreductase (cytochrome b-c1 complex, complex III, CIII). The cofactor is Cu cation.

It localises to the mitochondrion inner membrane. The catalysed reaction is 4 Fe(II)-[cytochrome c] + O2 + 8 H(+)(in) = 4 Fe(III)-[cytochrome c] + 2 H2O + 4 H(+)(out). In terms of biological role, component of the cytochrome c oxidase, the last enzyme in the mitochondrial electron transport chain which drives oxidative phosphorylation. The respiratory chain contains 3 multisubunit complexes succinate dehydrogenase (complex II, CII), ubiquinol-cytochrome c oxidoreductase (cytochrome b-c1 complex, complex III, CIII) and cytochrome c oxidase (complex IV, CIV), that cooperate to transfer electrons derived from NADH and succinate to molecular oxygen, creating an electrochemical gradient over the inner membrane that drives transmembrane transport and the ATP synthase. Cytochrome c oxidase is the component of the respiratory chain that catalyzes the reduction of oxygen to water. Electrons originating from reduced cytochrome c in the intermembrane space (IMS) are transferred via the dinuclear copper A center (CU(A)) of subunit 2 and heme A of subunit 1 to the active site in subunit 1, a binuclear center (BNC) formed by heme A3 and copper B (CU(B)). The BNC reduces molecular oxygen to 2 water molecules using 4 electrons from cytochrome c in the IMS and 4 protons from the mitochondrial matrix. This chain is Cytochrome c oxidase subunit 2 (COII), found in Metridium senile (Brown sea anemone).